The sequence spans 527 residues: Flavonoid 3',5'-hydroxylase CYP75B138 (527 aa).

The helical transmembrane segment at Leu-6–Phe-26 threads the bilayer. Position 459 (Cys-459) interacts with heme.

This sequence belongs to the cytochrome P450 family. Heme is required as a cofactor. In terms of tissue distribution, expressed in young cromes.

The protein resides in the membrane. The enzyme catalyses a 3',5'-unsubstituted flavanone + 2 reduced [NADPH--hemoprotein reductase] + 2 O2 = a 3',5'-dihydroxyflavanone + 2 oxidized [NADPH--hemoprotein reductase] + 2 H2O + 2 H(+). The catalysed reaction is (2S)-naringenin + 2 reduced [NADPH--hemoprotein reductase] + 2 O2 = (2S)-dihydrotricetin + 2 oxidized [NADPH--hemoprotein reductase] + 2 H2O + 2 H(+). It catalyses the reaction (2R,3R)-dihydrokaempferol + 2 reduced [NADPH--hemoprotein reductase] + 2 O2 = (2R,3R)-dihydromyricetin + 2 oxidized [NADPH--hemoprotein reductase] + 2 H2O + 2 H(+). It carries out the reaction kaempferol + 2 reduced [NADPH--hemoprotein reductase] + 2 O2 = myricetin + 2 oxidized [NADPH--hemoprotein reductase] + 2 H2O + 2 H(+). It participates in flavonoid metabolism. Its function is as follows. Flavonoid 3',5'-hydroxylase that catalyzes the 3'- and 5'-hydroxylation of flavanones, dihydroflavonols and flavonols. Converts narigenin to dihydrotricetin, dihydrokaempferol to dihydromyricetin and kaempferol to myricetin. This is Flavonoid 3',5'-hydroxylase CYP75B138 from Crocosmia x crocosmiiflora (Montbretia).